The primary structure comprises 249 residues: Ubiquinone biosynthesis O-methyltransferase (249 aa).

A disordered region spans residues 1-21 (MIPEVSNEASQPAAHRQENVD). The S-adenosyl-L-methionine site is built by Arg-52, Gly-72, Asp-93, and Met-137.

It belongs to the methyltransferase superfamily. UbiG/COQ3 family.

It carries out the reaction a 3-demethylubiquinol + S-adenosyl-L-methionine = a ubiquinol + S-adenosyl-L-homocysteine + H(+). The catalysed reaction is a 3-(all-trans-polyprenyl)benzene-1,2-diol + S-adenosyl-L-methionine = a 2-methoxy-6-(all-trans-polyprenyl)phenol + S-adenosyl-L-homocysteine + H(+). It functions in the pathway cofactor biosynthesis; ubiquinone biosynthesis. O-methyltransferase that catalyzes the 2 O-methylation steps in the ubiquinone biosynthetic pathway. This Sodalis glossinidius (strain morsitans) protein is Ubiquinone biosynthesis O-methyltransferase.